The sequence spans 319 residues: Protoheme IX farnesyltransferase (319 aa).

9 consecutive transmembrane segments (helical) span residues 34 to 54 (VMSLVVFTAFAGLVLAPGHIN), 55 to 75 (PVLGLIAILCIAVGAGASGAL), 95 to 115 (IPAGRVAPSEALAFGLVLSGF), 119 to 139 (ILGLAVNWLSAAILAFTIFFY), 155 to 175 (IVIGGAAGAFPPVIGWACVTG), 182 to 202 (VVLFLIIFLWTPAHFWALALF), 221 to 241 (VPTTKNQIVAYAVLTAIIGVV), 244 to 264 (FMGFASLGYGVVATVLGVIFV), and 291 to 311 (IFYLFAIFSALLIDRLVAVLM).

This sequence belongs to the UbiA prenyltransferase family. Protoheme IX farnesyltransferase subfamily.

It is found in the cell inner membrane. The catalysed reaction is heme b + (2E,6E)-farnesyl diphosphate + H2O = Fe(II)-heme o + diphosphate. It participates in porphyrin-containing compound metabolism; heme O biosynthesis; heme O from protoheme: step 1/1. Functionally, converts heme B (protoheme IX) to heme O by substitution of the vinyl group on carbon 2 of heme B porphyrin ring with a hydroxyethyl farnesyl side group. The protein is Protoheme IX farnesyltransferase of Rhizobium rhizogenes (strain K84 / ATCC BAA-868) (Agrobacterium radiobacter).